The chain runs to 130 residues: MTTQSLETLVETLSNLTVLELAALKKLLEDKWDVTAAAPMMAVAAGAAVGGDAAPAESTEFAVILEDVPADKKIGVLKVVREVTGLALKEAKEMTEGLPKTVKEKTSKSDAEDTVKKLQDAGAKASFKGL.

The interval 94–114 (MTEGLPKTVKEKTSKSDAEDT) is disordered.

Belongs to the bacterial ribosomal protein bL12 family. Homodimer. Part of the ribosomal stalk of the 50S ribosomal subunit. Forms a multimeric L10(L12)X complex, where L10 forms an elongated spine to which 2 to 4 L12 dimers bind in a sequential fashion. Binds GTP-bound translation factors.

In terms of biological role, forms part of the ribosomal stalk which helps the ribosome interact with GTP-bound translation factors. Is thus essential for accurate translation. In Chlamydia caviae (strain ATCC VR-813 / DSM 19441 / 03DC25 / GPIC) (Chlamydophila caviae), this protein is Large ribosomal subunit protein bL12.